Consider the following 136-residue polypeptide: Acyl-CoA thioesterase YbgC (136 aa).

Asp-18 is an active-site residue.

The protein belongs to the 4-hydroxybenzoyl-CoA thioesterase family.

Displays acyl-CoA thioesterase activity with short chain aliphatic acyl-CoA thioesters, such as propionyl-CoA and butyryl-CoA. Enzyme activity is relatively low, suggesting that the acyl-CoA thioesters used in the assays are not the physiological substrates. Has no detectable activity with 4-hydroxybenzoyl-CoA, lauroyl-CoA (C12:0), arachidoyl-CoA (C20:0) and arachidonoyl-CoA (C20:4). The sequence is that of Acyl-CoA thioesterase YbgC (ybgC) from Haemophilus influenzae (strain ATCC 51907 / DSM 11121 / KW20 / Rd).